The following is a 344-amino-acid chain: Protein BIM1 (344 aa).

Position 2 is an N-acetylserine (S2). Residues 6–107 (GESRTELLTW…FLQWLKKHWI (102 aa)) form the Calponin-homology (CH) domain. Residues 126–173 (IITNNSATKPRTVSNPTTAKRSSSTGTGSAMSGGLATRHSSLGINGSR) are disordered. Positions 127-146 (ITNNSATKPRTVSNPTTAKR) are enriched in polar residues. Low complexity predominate over residues 147-159 (SSSTGTGSAMSGG). A Phosphoserine modification is found at S157. Polar residues predominate over residues 163–173 (RHSSLGINGSR). Residues 188–281 (ELTKSQETIG…LYATAEGFEM (94 aa)) enclose the EB1 C-terminal domain. A disordered region spans residues 292–312 (NLGEHGTVPNQGGYANSNGEV).

Belongs to the MAPRE family.

Its subcellular location is the cytoplasm. It is found in the cytoskeleton. Binds microtubules. The protein is Protein BIM1 (BIM1) of Saccharomyces cerevisiae (strain ATCC 204508 / S288c) (Baker's yeast).